A 556-amino-acid polypeptide reads, in one-letter code: Urocanate hydratase (556 aa).

Residues 52 to 53 (GG), Q130, 176 to 178 (GMG), E196, R201, 242 to 243 (NA), 263 to 267 (QTSAH), 273 to 274 (YL), and Y322 contribute to the NAD(+) site. The active site involves C410. NAD(+) is bound at residue G492.

This sequence belongs to the urocanase family. Requires NAD(+) as cofactor.

It localises to the cytoplasm. The enzyme catalyses 4-imidazolone-5-propanoate = trans-urocanate + H2O. Its pathway is amino-acid degradation; L-histidine degradation into L-glutamate; N-formimidoyl-L-glutamate from L-histidine: step 2/3. Functionally, catalyzes the conversion of urocanate to 4-imidazolone-5-propionate. The polypeptide is Urocanate hydratase (Shewanella piezotolerans (strain WP3 / JCM 13877)).